Consider the following 182-residue polypeptide: MNNYFTTVYPIKKILEKNGCKNCKVGYTGQRAFIIKCEKCKNYDRGNKLKKKNGRVEVSTSQELSIFPIGSMVSYINNKDEFRKGGYITKITADYFIYVTPDFETKYRVRYKNIKKMWVGDVYKVSSDIVSLSETTQPKTDFPVKIGNITVYYASDNTKKKNFMKTKKYKTSLEWYNYFHKN.

This sequence belongs to the mimivirus L6/L7/L57 family.

This is an uncharacterized protein from Acanthamoeba polyphaga mimivirus (APMV).